Here is a 348-residue protein sequence, read N- to C-terminus: 4-hydroxy-3-methylbut-2-enyl diphosphate reductase (348 aa).

Position 21 (cysteine 21) interacts with [4Fe-4S] cluster. The (2E)-4-hydroxy-3-methylbut-2-enyl diphosphate site is built by histidine 50 and histidine 86. 2 residues coordinate dimethylallyl diphosphate: histidine 50 and histidine 86. Isopentenyl diphosphate is bound by residues histidine 50 and histidine 86. Cysteine 108 is a binding site for [4Fe-4S] cluster. Histidine 136 is a binding site for (2E)-4-hydroxy-3-methylbut-2-enyl diphosphate. Histidine 136 serves as a coordination point for dimethylallyl diphosphate. Position 136 (histidine 136) interacts with isopentenyl diphosphate. Glutamate 138 functions as the Proton donor in the catalytic mechanism. Threonine 177 contacts (2E)-4-hydroxy-3-methylbut-2-enyl diphosphate. Residue cysteine 207 coordinates [4Fe-4S] cluster. Residues serine 235, serine 236, asparagine 237, and serine 280 each coordinate (2E)-4-hydroxy-3-methylbut-2-enyl diphosphate. Residues serine 235, serine 236, asparagine 237, and serine 280 each contribute to the dimethylallyl diphosphate site. Residues serine 235, serine 236, asparagine 237, and serine 280 each contribute to the isopentenyl diphosphate site.

The protein belongs to the IspH family. Requires [4Fe-4S] cluster as cofactor.

The catalysed reaction is isopentenyl diphosphate + 2 oxidized [2Fe-2S]-[ferredoxin] + H2O = (2E)-4-hydroxy-3-methylbut-2-enyl diphosphate + 2 reduced [2Fe-2S]-[ferredoxin] + 2 H(+). It carries out the reaction dimethylallyl diphosphate + 2 oxidized [2Fe-2S]-[ferredoxin] + H2O = (2E)-4-hydroxy-3-methylbut-2-enyl diphosphate + 2 reduced [2Fe-2S]-[ferredoxin] + 2 H(+). The protein operates within isoprenoid biosynthesis; dimethylallyl diphosphate biosynthesis; dimethylallyl diphosphate from (2E)-4-hydroxy-3-methylbutenyl diphosphate: step 1/1. It functions in the pathway isoprenoid biosynthesis; isopentenyl diphosphate biosynthesis via DXP pathway; isopentenyl diphosphate from 1-deoxy-D-xylulose 5-phosphate: step 6/6. Catalyzes the conversion of 1-hydroxy-2-methyl-2-(E)-butenyl 4-diphosphate (HMBPP) into a mixture of isopentenyl diphosphate (IPP) and dimethylallyl diphosphate (DMAPP). Acts in the terminal step of the DOXP/MEP pathway for isoprenoid precursor biosynthesis. The polypeptide is 4-hydroxy-3-methylbut-2-enyl diphosphate reductase (Agrobacterium fabrum (strain C58 / ATCC 33970) (Agrobacterium tumefaciens (strain C58))).